The primary structure comprises 315 residues: Aspartate carbamoyltransferase catalytic subunit (315 aa).

Carbamoyl phosphate is bound by residues Arg64 and Thr65. Lys92 provides a ligand contact to L-aspartate. The carbamoyl phosphate site is built by Arg114, His142, and Gln145. L-aspartate is bound by residues Arg176 and Arg230. 2 residues coordinate carbamoyl phosphate: Gly271 and Pro272.

The protein belongs to the aspartate/ornithine carbamoyltransferase superfamily. ATCase family. In terms of assembly, heterododecamer (2C3:3R2) of six catalytic PyrB chains organized as two trimers (C3), and six regulatory PyrI chains organized as three dimers (R2).

The enzyme catalyses carbamoyl phosphate + L-aspartate = N-carbamoyl-L-aspartate + phosphate + H(+). It participates in pyrimidine metabolism; UMP biosynthesis via de novo pathway; (S)-dihydroorotate from bicarbonate: step 2/3. Its function is as follows. Catalyzes the condensation of carbamoyl phosphate and aspartate to form carbamoyl aspartate and inorganic phosphate, the committed step in the de novo pyrimidine nucleotide biosynthesis pathway. The sequence is that of Aspartate carbamoyltransferase catalytic subunit from Lawsonia intracellularis (strain PHE/MN1-00).